The chain runs to 361 residues: Terpene synthase 6 (361 aa).

The short motif at Asp-81–Ala-86 is the DDxx(x)D/E motif element. Residues Asn-223–Glu-231 carry the NDxxSxxxD/E motif motif.

This sequence belongs to the terpene synthase family.

The catalysed reaction is (2E,6E)-farnesyl diphosphate = (2S,3R,6S,9S)-(-)-protoillud-7-ene + diphosphate. In terms of biological role, terpene synthase that converts its substrate farnesyl diphosphate (FPP) into the sesquiterpene (2S,3R,6S,9S)-(-)-protoillud-7-ene. This Dictyostelium discoideum (Social amoeba) protein is Terpene synthase 6.